The sequence spans 648 residues: Transcriptional regulator ManR (648 aa).

2 consecutive PRD domains span residues 187–292 (KFLH…YPLQ) and 297–404 (LENA…MQGS). Phosphohistidine; by HPr is present on residues H222, H281, H334, and H393. The region spanning 409–500 (KKAVIVCHMG…FIRQLGESHR (92 aa)) is the PTS EIIB type-2 domain. The residue at position 415 (C415) is a Phosphocysteine; by EIIA. The region spanning 510–648 (NNTTPFLVFL…VMTFLSHLDY (139 aa)) is the PTS EIIA type-2 domain. Residue H570 is modified to Phosphohistidine; by EIIB.

This sequence belongs to the transcriptional antiterminator BglG family.

It catalyses the reaction D-mannose(out) + N(pros)-phospho-L-histidyl-[protein] = D-mannose 6-phosphate(in) + L-histidyl-[protein]. The regulatory activity of ManR is modulated by phosphorylation and dephosphorylation of the various ManR domains. It becomes activated via phosphoryl group transfer from PEP, EI and HPr on the two conserved histidine residues in the PRD 2 domain, whereas phosphorylation of the EIIA-like domain on His-570 by the PTS EIIB-Man domain of ManP inactivates ManR. Functionally, positively regulates the expression of the mannose operon that consists of three genes, manP, manA, and yjdF, which are responsible for the transport and utilization of mannose. Also activates its own expression. This Bacillus subtilis (strain 168) protein is Transcriptional regulator ManR (manR).